A 190-amino-acid chain; its full sequence is Elongation factor P-like protein (190 aa).

It belongs to the elongation factor P family.

The chain is Elongation factor P-like protein from Pseudoalteromonas translucida (strain TAC 125).